The sequence spans 282 residues: 4-hydroxybenzoate octaprenyltransferase (282 aa).

The next 9 helical transmembrane spans lie at 17 to 37, 40 to 60, 90 to 110, 113 to 133, 135 to 155, 163 to 183, 207 to 227, 231 to 251, and 262 to 282; these read IGIL…NQGF, IDLL…GCVI, AFIL…KLPI, FYFA…KRFL, APQL…FIAS, FIVL…MYAM, LIIA…AINK, WFFY…LKLI, and AFLV…LALI.

Belongs to the UbiA prenyltransferase family. Mg(2+) is required as a cofactor.

The protein resides in the cell inner membrane. It carries out the reaction all-trans-octaprenyl diphosphate + 4-hydroxybenzoate = 4-hydroxy-3-(all-trans-octaprenyl)benzoate + diphosphate. It functions in the pathway cofactor biosynthesis; ubiquinone biosynthesis. Catalyzes the prenylation of para-hydroxybenzoate (PHB) with an all-trans polyprenyl group. Mediates the second step in the final reaction sequence of ubiquinone-8 (UQ-8) biosynthesis, which is the condensation of the polyisoprenoid side chain with PHB, generating the first membrane-bound Q intermediate 3-octaprenyl-4-hydroxybenzoate. This Legionella pneumophila (strain Corby) protein is 4-hydroxybenzoate octaprenyltransferase.